An 829-amino-acid polypeptide reads, in one-letter code: Leucine--tRNA ligase (829 aa).

The 'HIGH' region signature appears at 40 to 50 (PYPSGNIHMGH). Positions 581–585 (KMSKS) match the 'KMSKS' region motif. Lysine 584 is a binding site for ATP.

This sequence belongs to the class-I aminoacyl-tRNA synthetase family.

It is found in the cytoplasm. It catalyses the reaction tRNA(Leu) + L-leucine + ATP = L-leucyl-tRNA(Leu) + AMP + diphosphate. The polypeptide is Leucine--tRNA ligase (Oleidesulfovibrio alaskensis (strain ATCC BAA-1058 / DSM 17464 / G20) (Desulfovibrio alaskensis)).